A 302-amino-acid chain; its full sequence is Sulfate adenylyltransferase subunit 2 (302 aa).

The segment at R280–F302 is disordered.

The protein belongs to the PAPS reductase family. CysD subfamily. In terms of assembly, heterodimer composed of CysD, the smaller subunit, and CysN.

The enzyme catalyses sulfate + ATP + H(+) = adenosine 5'-phosphosulfate + diphosphate. It participates in sulfur metabolism; hydrogen sulfide biosynthesis; sulfite from sulfate: step 1/3. In terms of biological role, with CysN forms the ATP sulfurylase (ATPS) that catalyzes the adenylation of sulfate producing adenosine 5'-phosphosulfate (APS) and diphosphate, the first enzymatic step in sulfur assimilation pathway. APS synthesis involves the formation of a high-energy phosphoric-sulfuric acid anhydride bond driven by GTP hydrolysis by CysN coupled to ATP hydrolysis by CysD. This Shewanella putrefaciens (strain CN-32 / ATCC BAA-453) protein is Sulfate adenylyltransferase subunit 2.